Consider the following 487-residue polypeptide: Solute carrier family 22 member 15-like (487 aa).

The helical transmembrane segment at 23–43 threads the bilayer; sequence FLTLLQIYVACQSMLIVLVGA. N-linked (GlcNAc...) asparagine glycosylation occurs at N70. 11 helical membrane-spanning segments follow: residues 90–110, 117–137, 141–161, 178–198, 203–223, 286–306, 315–335, 345–365, 374–394, 408–428, and 435–455; these read LASS…GPLS, PVYL…ALAP, VFAV…LVSF, SLTN…GFYI, TLAF…FVLP, ILLM…TLNA, LNVA…LYFI, ATAG…FVPE, TVLA…VYIY, LGVC…IPAM, and MPFV…LLLP.

Belongs to the major facilitator (TC 2.A.1) superfamily. Organic cation transporter (TC 2.A.1.19) family.

It is found in the membrane. Probably transports organic cations. This chain is Solute carrier family 22 member 15-like (slc22a15b), found in Xenopus laevis (African clawed frog).